A 69-amino-acid polypeptide reads, in one-letter code: Large ribosomal subunit protein uL29 (69 aa).

It belongs to the universal ribosomal protein uL29 family.

The protein is Large ribosomal subunit protein uL29 of Rhodopseudomonas palustris (strain BisB5).